A 156-amino-acid polypeptide reads, in one-letter code: Transcription antitermination protein NusB (156 aa).

It belongs to the NusB family.

Functionally, involved in transcription antitermination. Required for transcription of ribosomal RNA (rRNA) genes. Binds specifically to the boxA antiterminator sequence of the ribosomal RNA (rrn) operons. This chain is Transcription antitermination protein NusB, found in Bartonella tribocorum (strain CIP 105476 / IBS 506).